The primary structure comprises 403 residues: Tyrosine--tRNA ligase (403 aa).

A 'HIGH' region motif is present at residues 45–54 (PTAPDLHLGH). The short motif at 229-233 (KMSKS) is the 'KMSKS' region element. K232 lines the ATP pocket. Positions 341 to 402 (VALCRLLAEA…GKRRFARITF (62 aa)) constitute an S4 RNA-binding domain.

The protein belongs to the class-I aminoacyl-tRNA synthetase family. TyrS type 2 subfamily. Homodimer.

The protein localises to the cytoplasm. The enzyme catalyses tRNA(Tyr) + L-tyrosine + ATP = L-tyrosyl-tRNA(Tyr) + AMP + diphosphate + H(+). Catalyzes the attachment of tyrosine to tRNA(Tyr) in a two-step reaction: tyrosine is first activated by ATP to form Tyr-AMP and then transferred to the acceptor end of tRNA(Tyr). This Geobacter sulfurreducens (strain ATCC 51573 / DSM 12127 / PCA) protein is Tyrosine--tRNA ligase.